We begin with the raw amino-acid sequence, 246 residues long: UPF0736 protein Aflv_2136 (246 aa).

The protein belongs to the UPF0736 family.

The sequence is that of UPF0736 protein Aflv_2136 from Anoxybacillus flavithermus (strain DSM 21510 / WK1).